A 200-amino-acid polypeptide reads, in one-letter code: Serine/arginine-rich splicing factor RSZ23 (200 aa).

In terms of domain architecture, RRM spans 2 to 71 (ARVYVGNLDP…NGWRVELSTK (70 aa)). The segment at 86 to 103 (MKCYECGEPGHFARECRL) adopts a CCHC-type zinc-finger fold. The tract at residues 105 to 200 (IGSGGLGSGR…REESPYANNA (96 aa)) is disordered. A compositionally biased stretch (basic residues) spans 113–139 (GRRRSRSRSRSPRYRGRSRSRSPRYRR).

It belongs to the splicing factor SR family. Post-translationally, extensively phosphorylated on serine residues in the RS domain. As to expression, expressed in roots, leaves and immature seeds.

Its subcellular location is the nucleus. Involved in pre-mRNA splicing. In protoplast assay, enhances splicing efficiency of WAXY intron 1 and alters the selection of the 5'-splice sites by stimulating site 1 (proximal site). The protein is Serine/arginine-rich splicing factor RSZ23 (RSZ23) of Oryza sativa subsp. japonica (Rice).